The sequence spans 93 residues: Probable Fe(2+)-trafficking protein (93 aa).

Belongs to the Fe(2+)-trafficking protein family.

Functionally, could be a mediator in iron transactions between iron acquisition and iron-requiring processes, such as synthesis and/or repair of Fe-S clusters in biosynthetic enzymes. The polypeptide is Probable Fe(2+)-trafficking protein (Acidithiobacillus ferrooxidans (strain ATCC 23270 / DSM 14882 / CIP 104768 / NCIMB 8455) (Ferrobacillus ferrooxidans (strain ATCC 23270))).